Reading from the N-terminus, the 176-residue chain is ATP-dependent protease subunit HslV (176 aa).

Residue T2 is part of the active site. Na(+)-binding residues include G157, C160, and T163.

It belongs to the peptidase T1B family. HslV subfamily. As to quaternary structure, a double ring-shaped homohexamer of HslV is capped on each side by a ring-shaped HslU homohexamer. The assembly of the HslU/HslV complex is dependent on binding of ATP.

It is found in the cytoplasm. It carries out the reaction ATP-dependent cleavage of peptide bonds with broad specificity.. With respect to regulation, allosterically activated by HslU binding. Protease subunit of a proteasome-like degradation complex believed to be a general protein degrading machinery. The protein is ATP-dependent protease subunit HslV of Pseudomonas fluorescens (strain ATCC BAA-477 / NRRL B-23932 / Pf-5).